A 609-amino-acid polypeptide reads, in one-letter code: Interleukin-1 receptor-associated kinase 3 (609 aa).

Residues 41–106 form the Death domain; sequence WRGLAERLSN…RAIHLIINYG (66 aa). Residue threonine 110 is modified to Phosphothreonine. The region spanning 178–463 is the Protein kinase domain; that stretch reads FHKDFLIGEG…SSLESTQPSL (286 aa). Residues 184–192, lysine 205, 308–311, and aspartate 324 each bind ATP; these read IGEGEIFEV and SSAN. Serine 480 is modified (phosphoserine).

This sequence belongs to the protein kinase superfamily. TKL Ser/Thr protein kinase family. Pelle subfamily. Monomer. Homodimer. May interact with IRAK4 (when phosphorylated). Interacts (when phosphorylated at Thr-110) with PIN1 (via WW domain) in response to IL33-mediated (but not TLR4 ligand LPS) dendritic cell stimulation. Expressed in inflamed lung macrophages (at protein level). Expressed in dendritic cells (at protein level). Highly expressed in liver and thymus and at lower levels in heart, brain, spleen and kidney.

Its subcellular location is the cytoplasm. It localises to the nucleus. Putative inactive protein kinase which regulates signaling downstream of immune receptors including IL1R and Toll-like receptors. Inhibits dissociation of IRAK1 and IRAK4 from the Toll-like receptor signaling complex by either inhibiting the phosphorylation of IRAK1 and IRAK4 or stabilizing the receptor complex. Upon IL33-induced lung inflammation, positively regulates expression of IL6, CSF3, CXCL2 and CCL5 mRNAs in dendritic cells. The protein is Interleukin-1 receptor-associated kinase 3 of Mus musculus (Mouse).